A 281-amino-acid polypeptide reads, in one-letter code: Ribosomal RNA small subunit methyltransferase A (281 aa).

Residues N25, L27, G52, E73, D99, and N118 each contribute to the S-adenosyl-L-methionine site.

It belongs to the class I-like SAM-binding methyltransferase superfamily. rRNA adenine N(6)-methyltransferase family. RsmA subfamily.

Its subcellular location is the cytoplasm. The enzyme catalyses adenosine(1518)/adenosine(1519) in 16S rRNA + 4 S-adenosyl-L-methionine = N(6)-dimethyladenosine(1518)/N(6)-dimethyladenosine(1519) in 16S rRNA + 4 S-adenosyl-L-homocysteine + 4 H(+). In terms of biological role, specifically dimethylates two adjacent adenosines (A1518 and A1519) in the loop of a conserved hairpin near the 3'-end of 16S rRNA in the 30S particle. May play a critical role in biogenesis of 30S subunits. This Erythrobacter litoralis (strain HTCC2594) protein is Ribosomal RNA small subunit methyltransferase A.